We begin with the raw amino-acid sequence, 344 residues long: MIELRNLSQRFPGPGGWVEALRNINLTIPQGEVFGIIGRSGAGKSTLVRTINLLTRPTEGNVVVGGRDLTMLPAGALREARREIGMIFQHFNLLSSRTVFDNVALPLELAGASRAEIDAAVLPLLDLVGLSAQKDRYPSQISGGQKQRVGIARALASQPKVLLSDEATSALDPETTRSILDLLKRINRELGLTIVLITHQMEVIKQVCDRVAVLDAGRVVEEGRVIDVFLQPHHEVTRALIGDVIAQELPPALKARVAERLKTGRGHLLRLAFTGSGVDQPILSETIRRYELDFNILHGQIDEIQGQAFGSLAVLAGGEPGKVGQALAFLREQGVVVEELSYVE.

The 240-residue stretch at isoleucine 2 to isoleucine 241 folds into the ABC transporter domain. Residue glycine 38–serine 45 participates in ATP binding.

The protein belongs to the ABC transporter superfamily. Methionine importer (TC 3.A.1.24) family. The complex is composed of two ATP-binding proteins (MetN), two transmembrane proteins (MetI) and a solute-binding protein (MetQ).

It is found in the cell inner membrane. The catalysed reaction is L-methionine(out) + ATP + H2O = L-methionine(in) + ADP + phosphate + H(+). The enzyme catalyses D-methionine(out) + ATP + H2O = D-methionine(in) + ADP + phosphate + H(+). In terms of biological role, part of the ABC transporter complex MetNIQ involved in methionine import. Responsible for energy coupling to the transport system. The chain is Methionine import ATP-binding protein MetN 1 from Burkholderia lata (strain ATCC 17760 / DSM 23089 / LMG 22485 / NCIMB 9086 / R18194 / 383).